The chain runs to 389 residues: MYKTKGGFQLTLQTLSLVVGFMAWSIIAPLMPFIKQDVNVTEGQISIILAIPVILGSVLRVPFGYLTNIVGAKWVFFTSFIVLLFPIFFLGQAQTPGMLMASGFFLGVGGAIFSVGVTSVPKYFPKEKVGLANGIYGMGNIGTAVSSFLAPPIAGIIGWQTTVRSYLIIIALFALIMFIFGDTQERKIKVPLMAQMKTLSKNYKLYYLSYWYFITFGAFVAFGIFLPNYLVNHFGIDKVDAGIRSGVFIALATFLRPIGGILGDKFNAVKVLMIDFVIMIIGAVILGISDHIALFTVGCLTISICAGIGNGLIFKLVPSYFSNEAGSANGIVSMMGGLGGFFPPLVITYVANLTGSSHLAFIFLAVFGCIALFTMRHLYQKEYGSLKHS.

12 helical membrane passes run 14–34 (TLSLVVGFMAWSIIAPLMPFI), 45–65 (ISIILAIPVILGSVLRVPFGY), 69–89 (IVGAKWVFFTSFIVLLFPIFF), 97–117 (GMLMASGFFLGVGGAIFSVGV), 139–159 (GNIGTAVSSFLAPPIAGIIGW), 161–181 (TTVRSYLIIIALFALIMFIFG), 211–231 (WYFITFGAFVAFGIFLPNYLV), 246–266 (GVFIALATFLRPIGGILGDKF), 268–288 (AVKVLMIDFVIMIIGAVILGI), 294–314 (LFTVGCLTISICAGIGNGLIF), 331–351 (IVSMMGGLGGFFPPLVITYVA), and 353–373 (LTGSSHLAFIFLAVFGCIALF).

The protein belongs to the major facilitator superfamily. Nitrate/nitrite porter (TC 2.A.1.8) family.

It localises to the cell membrane. In terms of biological role, probably required for nitrate uptake under anoxic conditions. Also possibly involved in excretion of nitrite produced by the dissimilatory reduction of nitrate. This chain is Probable nitrate transporter NarT (narT), found in Staphylococcus aureus (strain MRSA252).